The primary structure comprises 575 residues: Arginine--tRNA ligase (575 aa).

A 'HIGH' region motif is present at residues 131-141; the sequence is ANPTGPLHVGH.

Belongs to the class-I aminoacyl-tRNA synthetase family. In terms of assembly, monomer.

It is found in the cytoplasm. It catalyses the reaction tRNA(Arg) + L-arginine + ATP = L-arginyl-tRNA(Arg) + AMP + diphosphate. This chain is Arginine--tRNA ligase, found in Jannaschia sp. (strain CCS1).